Here is a 110-residue protein sequence, read N- to C-terminus: Urease subunit beta (110 aa).

The protein belongs to the urease beta subunit family. Heterotrimer of UreA (gamma), UreB (beta) and UreC (alpha) subunits. Three heterotrimers associate to form the active enzyme.

Its subcellular location is the cytoplasm. It carries out the reaction urea + 2 H2O + H(+) = hydrogencarbonate + 2 NH4(+). Its pathway is nitrogen metabolism; urea degradation; CO(2) and NH(3) from urea (urease route): step 1/1. This Pseudoalteromonas translucida (strain TAC 125) protein is Urease subunit beta.